A 20-amino-acid polypeptide reads, in one-letter code: Cytochrome c oxidase subunit 8B, mitochondrial (20 aa).

A disordered region spans residues 1–20 (LSGKPAKXHLSVGEQAIAMT).

This sequence belongs to the cytochrome c oxidase VIII family. As to quaternary structure, component of the cytochrome c oxidase (complex IV, CIV), a multisubunit enzyme composed of 14 subunits. The complex is composed of a catalytic core of 3 subunits MT-CO1, MT-CO2 and MT-CO3, encoded in the mitochondrial DNA, and 11 supernumerary subunits COX4I, COX5A, COX5B, COX6A, COX6B, COX6C, COX7A, COX7B, COX7C, COX8 and NDUFA4, which are encoded in the nuclear genome. The complex exists as a monomer or a dimer and forms supercomplexes (SCs) in the inner mitochondrial membrane with NADH-ubiquinone oxidoreductase (complex I, CI) and ubiquinol-cytochrome c oxidoreductase (cytochrome b-c1 complex, complex III, CIII), resulting in different assemblies (supercomplex SCI(1)III(2)IV(1) and megacomplex MCI(2)III(2)IV(2)).

It localises to the mitochondrion inner membrane. It participates in energy metabolism; oxidative phosphorylation. Its function is as follows. Component of the cytochrome c oxidase, the last enzyme in the mitochondrial electron transport chain which drives oxidative phosphorylation. The respiratory chain contains 3 multisubunit complexes succinate dehydrogenase (complex II, CII), ubiquinol-cytochrome c oxidoreductase (cytochrome b-c1 complex, complex III, CIII) and cytochrome c oxidase (complex IV, CIV), that cooperate to transfer electrons derived from NADH and succinate to molecular oxygen, creating an electrochemical gradient over the inner membrane that drives transmembrane transport and the ATP synthase. Cytochrome c oxidase is the component of the respiratory chain that catalyzes the reduction of oxygen to water. Electrons originating from reduced cytochrome c in the intermembrane space (IMS) are transferred via the dinuclear copper A center (CU(A)) of subunit 2 and heme A of subunit 1 to the active site in subunit 1, a binuclear center (BNC) formed by heme A3 and copper B (CU(B)). The BNC reduces molecular oxygen to 2 water molecules using 4 electrons from cytochrome c in the IMS and 4 protons from the mitochondrial matrix. This Oncorhynchus mykiss (Rainbow trout) protein is Cytochrome c oxidase subunit 8B, mitochondrial.